The following is a 733-amino-acid chain: E3 ubiquitin-protein ligase COP1 (733 aa).

The segment at 1–43 is disordered; that stretch reads MSGSRQAGSGSAGTSPGSSAASSVTSASSSLSSSPSPPSVAAS. Positions 111–115 match the Nuclear localization signal 1 motif; that stretch reads SSRKR. Residues 138–176 form an RING-type zinc finger; sequence CPICFDMIEEAYMTKCGHSFCYKCIHQSLEDNNRCPKCN. The short motif at 197 to 208 is the Nuclear localization signal 2 element; the sequence is KQKQRFEEKRFK. The stretch at 231–306 forms a coiled coil; it reads DQDNLDLANV…RVEEMSGLYS (76 aa). Residues 237–247 carry the Nuclear export signal motif; it reads LANVNLMLELL. Residues 307-327 form a disordered region; that stretch reads PVSEDSTVPQFEAPSPSHSSI. WD repeat units lie at residues 421 to 460, 470 to 510, 513 to 553, 555 to 595, 599 to 637, 640 to 679, and 695 to 731; these read NGSS…QDAV, TCNS…RSKV, EHEK…SVAS, EAKA…QPIM, GHRK…CLRS, GHIN…TLLT, and EDDT…KVLE. Positions 645-647 are interaction with TRIB1; it reads KNF.

The protein belongs to the COP1 family. In terms of assembly, homodimer. Homodimerization is mediated by the coiled coil domain. Component of the DCX DET1-COP1 ubiquitin ligase complex at least composed of RBX1, DET1, DDB1, CUL4A and COP1. Isoform 2 does not interact with CUL4A but still binds to RBX1, suggesting that the interaction may be mediated by another cullin protein. Isoform 1 and isoform 2 interact with CUL5 but not with CUL1, CUL2 not CUL3. Interacts with bZIP transcription factors JUN, JUNB and JUND but not with FOS, ATF2 nor XBP1. Interacts with p53 (TP53). Interacts with COPS6; this interaction stabilizes RFWD2 through reducing its auto-ubiquitination and decelerating its turnover rate. Interacts with SFN; this interaction leads to SFN degradation. Interacts with p53/TP53 and MTA1. Interacts with TRIB1 (via C-terminus) and TRIB2.

It localises to the nucleus speckle. It is found in the cytoplasm. It carries out the reaction S-ubiquitinyl-[E2 ubiquitin-conjugating enzyme]-L-cysteine + [acceptor protein]-L-lysine = [E2 ubiquitin-conjugating enzyme]-L-cysteine + N(6)-ubiquitinyl-[acceptor protein]-L-lysine.. It functions in the pathway protein modification; protein ubiquitination. Its activity is regulated as follows. TRIB1 competes with substrates for RFWD2 binding. E3 ubiquitin-protein ligase that mediates ubiquitination and subsequent proteasomal degradation of target proteins. E3 ubiquitin ligases accept ubiquitin from an E2 ubiquitin-conjugating enzyme in the form of a thioester and then directly transfers the ubiquitin to targeted substrates. Involved in JUN ubiquitination and degradation. Directly involved in p53 (TP53) ubiquitination and degradation, thereby abolishing p53-dependent transcription and apoptosis. Ubiquitinates p53 independently of MDM2 or RCHY1. Probably mediates E3 ubiquitin ligase activity by functioning as the essential RING domain subunit of larger E3 complexes. In contrast, it does not constitute the catalytic RING subunit in the DCX DET1-COP1 complex that negatively regulates JUN, the ubiquitin ligase activity being mediated by RBX1. Involved in 14-3-3 protein sigma/SFN ubiquitination and proteasomal degradation, leading to AKT activation and promotion of cell survival. Ubiquitinates MTA1 leading to its proteasomal degradation. Upon binding to TRIB1, ubiquitinates CEBPA, which lacks a canonical COP1-binding motif. The protein is E3 ubiquitin-protein ligase COP1 of Mus musculus (Mouse).